A 549-amino-acid polypeptide reads, in one-letter code: Leucine-rich repeat, immunoglobulin-like domain and transmembrane domain-containing protein 2 (549 aa).

The N-terminal stretch at Met-1 to Pro-22 is a signal peptide. Residues Phe-23–Pro-54 enclose the LRRNT domain. 4 LRR repeats span residues Ser-80–Pro-103, Glu-104–Ala-125, Leu-128–Phe-149, and Asn-152–Asn-173. Asn-90 carries N-linked (GlcNAc...) asparagine glycosylation. Residues Asn-200–Lys-252 enclose the LRRCT domain. One can recognise an Ig-like domain in the interval Pro-253–Val-339. An N-linked (GlcNAc...) asparagine glycan is attached at Asn-261. Cys-274 and Cys-327 are joined by a disulfide. The Fibronectin type-III domain maps to Glu-361–Val-447. A helical membrane pass occupies residues Leu-463–Val-483. Asn-491 carries an N-linked (GlcNAc...) asparagine glycan. A disordered region spans residues Phe-521–Ser-549. A compositionally biased stretch (acidic residues) spans Glu-538–Ser-549.

In terms of assembly, interacts with LRIT1; may form a heterodimer with LRIT1.

The protein resides in the membrane. The protein is Leucine-rich repeat, immunoglobulin-like domain and transmembrane domain-containing protein 2 (Lrit2) of Mus musculus (Mouse).